The following is a 180-amino-acid chain: Large ribosomal subunit protein uL5 (180 aa).

This sequence belongs to the universal ribosomal protein uL5 family. Part of the 50S ribosomal subunit; part of the 5S rRNA/L5/L18/L25 subcomplex. Contacts the 5S rRNA and the P site tRNA. Forms a bridge to the 30S subunit in the 70S ribosome.

This is one of the proteins that bind and probably mediate the attachment of the 5S RNA into the large ribosomal subunit, where it forms part of the central protuberance. In the 70S ribosome it contacts protein S13 of the 30S subunit (bridge B1b), connecting the 2 subunits; this bridge is implicated in subunit movement. Contacts the P site tRNA; the 5S rRNA and some of its associated proteins might help stabilize positioning of ribosome-bound tRNAs. The sequence is that of Large ribosomal subunit protein uL5 from Latilactobacillus sakei subsp. sakei (strain 23K) (Lactobacillus sakei subsp. sakei).